A 371-amino-acid polypeptide reads, in one-letter code: Cytochrome b (371 aa).

4 consecutive transmembrane segments (helical) span residues 25-45, 69-90, 105-125, and 170-190; these read FGSMLLACSSMQVLTGFFLAV, WLMQNLHAIGASMFFICIYTHI, WLSGTTLLIMLMATAFFGYVL, and FFALHFILPFGIISLSSLHIM. His75 and His89 together coordinate heme b. Heme b-binding residues include His174 and His188. His193 contacts a ubiquinone. A run of 4 helical transmembrane segments spans residues 218–238, 280–300, 312–332, and 339–358; these read YKDMLMLSLMVLALLTTVAFF, LGGALALVMSIMILLTTPFTH, IMQFMFWTLVATFTVITWAAT, and FTAISQAASTMYFMFFITNP.

The protein belongs to the cytochrome b family. The cytochrome bc1 complex contains 3 respiratory subunits (MT-CYB, CYC1 and UQCRFS1), 2 core proteins (UQCRC1 and UQCRC2) and probably 6 low-molecular weight proteins. Heme b is required as a cofactor.

It is found in the mitochondrion inner membrane. In terms of biological role, component of the ubiquinol-cytochrome c reductase complex (complex III or cytochrome b-c1 complex) that is part of the mitochondrial respiratory chain. The b-c1 complex mediates electron transfer from ubiquinol to cytochrome c. Contributes to the generation of a proton gradient across the mitochondrial membrane that is then used for ATP synthesis. The chain is Cytochrome b (MT-CYB) from Eryx colubrinus loveridgei.